The following is a 134-amino-acid chain: Large ribosomal subunit protein uL16c (134 aa).

This sequence belongs to the universal ribosomal protein uL16 family. In terms of assembly, part of the 50S ribosomal subunit.

It is found in the plastid. The protein resides in the chloroplast. The sequence is that of Large ribosomal subunit protein uL16c from Nephroselmis olivacea (Green alga).